Here is a 48-residue protein sequence, read N- to C-terminus: Bacteriochlorophyll c-binding protein (48 aa).

Residue His25 participates in a bacteriochlorophyll c binding.

The protein belongs to the BChl C/E-binding protein family.

The protein localises to the chlorosome. It localises to the chlorosome envelope. In terms of biological role, component of the photosynthetic apparatus. The light harvesting B740 complex binds bacteriochlorophyll c. This is Bacteriochlorophyll c-binding protein (csmA) from Chlorobaculum thiosulfatiphilum (Chlorobium limicola f.sp. thiosulfatophilum).